A 530-amino-acid polypeptide reads, in one-letter code: Rho GTPase-activating protein 36 (530 aa).

Positions 1–19 are cleaved as a signal peptide; it reads MPPLLLLSALIFLVNVLGG. In terms of domain architecture, Rho-GAP spans 209-409; the sequence is MSLNPIAKQI…AMIDNWDVLF (201 aa). Residues 471 to 512 form a disordered region; it reads GQSKPFDEGSSEEPAVPPGTARSHDDEEGAGNPLILEQDRPL.

In terms of assembly, may interacts (via the Rho-GAP domain) with the active form of RAC1.

GTPase activator for the Rho-type GTPases by converting them to an inactive GDP-bound state. The sequence is that of Rho GTPase-activating protein 36 (ARHGAP36) from Bos taurus (Bovine).